Reading from the N-terminus, the 104-residue chain is Transcription factor ILI1 (104 aa).

The segment covering 1 to 11 (MSSSRRSRSRR) has biased composition (basic residues). The disordered stretch occupies residues 1-27 (MSSSRRSRSRRAGSSVPSSSSSSRTSI). Residues 12–27 (AGSSVPSSSSSSRTSI) show a composition bias toward low complexity. In terms of domain architecture, bHLH spans 16-71 (VPSSSSSSRTSISEDQIAELLSKLQALLPESQARNGAHRGSAARVLQETCSYIRSL).

This sequence belongs to the bHLH protein family. In terms of assembly, interacts with IBH1.

Its function is as follows. Atypical and probable non DNA-binding bHLH transcription factor that acts as a positive regulator of cell elongation and plant development. Binds the transcription repressor IBH1 and forms a heterodimer of antagonistic bHLH transcription factors that function downstream of BZR1 to mediate brassinosteroid regulation of cell elongation and lamina inclination. The polypeptide is Transcription factor ILI1 (ILI1) (Oryza sativa subsp. indica (Rice)).